Here is an 869-residue protein sequence, read N- to C-terminus: Alanine--tRNA ligase (869 aa).

Zn(2+) is bound by residues histidine 559, histidine 563, cysteine 660, and histidine 664.

Belongs to the class-II aminoacyl-tRNA synthetase family. It depends on Zn(2+) as a cofactor.

The protein resides in the cytoplasm. It catalyses the reaction tRNA(Ala) + L-alanine + ATP = L-alanyl-tRNA(Ala) + AMP + diphosphate. Its function is as follows. Catalyzes the attachment of alanine to tRNA(Ala) in a two-step reaction: alanine is first activated by ATP to form Ala-AMP and then transferred to the acceptor end of tRNA(Ala). Also edits incorrectly charged Ser-tRNA(Ala) and Gly-tRNA(Ala) via its editing domain. The protein is Alanine--tRNA ligase of Janthinobacterium sp. (strain Marseille) (Minibacterium massiliensis).